A 398-amino-acid polypeptide reads, in one-letter code: Probable elongation factor 1-gamma (398 aa).

In terms of domain architecture, GST C-terminal spans Gly-66 to Phe-199. Residues Ala-210–Lys-248 form a disordered region. A compositionally biased stretch (basic and acidic residues) spans Pro-211 to Lys-221. The 160-residue stretch at Ser-239–Lys-398 folds into the EF-1-gamma C-terminal domain.

EF-1 is composed of four subunits: alpha, beta, delta, and gamma. In terms of processing, AMPylated by fic-1.

Probably plays a role in anchoring the complex to other cellular components. This is Probable elongation factor 1-gamma from Caenorhabditis elegans.